The following is a 186-amino-acid chain: Thymidine kinase (186 aa).

8 to 15 (GPMYSGKT) is a binding site for ATP. Catalysis depends on E86, which acts as the Proton acceptor. F118 contacts substrate. 2 residues coordinate Zn(2+): C143 and C146. 162–166 (IIEIG) contacts substrate. Residues C175 and C178 each contribute to the Zn(2+) site.

The protein belongs to the thymidine kinase family.

It carries out the reaction thymidine + ATP = dTMP + ADP + H(+). The protein is Thymidine kinase (TK) of Choristoneura fumiferana (Spruce budworm moth).